Here is a 372-residue protein sequence, read N- to C-terminus: Queuine tRNA-ribosyltransferase (372 aa).

The active-site Proton acceptor is aspartate 92. Substrate contacts are provided by residues 92 to 96 (DSGGY), aspartate 146, glutamine 188, and glycine 215. The segment at 246–252 (GIGSLRE) is RNA binding. Aspartate 265 serves as the catalytic Nucleophile. Positions 270–274 (TRLGR) are RNA binding; important for wobble base 34 recognition. The Zn(2+) site is built by cysteine 303, cysteine 305, cysteine 308, and histidine 334.

Belongs to the queuine tRNA-ribosyltransferase family. In terms of assembly, homodimer. Within each dimer, one monomer is responsible for RNA recognition and catalysis, while the other monomer binds to the replacement base PreQ1. The cofactor is Zn(2+).

It carries out the reaction 7-aminomethyl-7-carbaguanine + guanosine(34) in tRNA = 7-aminomethyl-7-carbaguanosine(34) in tRNA + guanine. It functions in the pathway tRNA modification; tRNA-queuosine biosynthesis. Its function is as follows. Catalyzes the base-exchange of a guanine (G) residue with the queuine precursor 7-aminomethyl-7-deazaguanine (PreQ1) at position 34 (anticodon wobble position) in tRNAs with GU(N) anticodons (tRNA-Asp, -Asn, -His and -Tyr). Catalysis occurs through a double-displacement mechanism. The nucleophile active site attacks the C1' of nucleotide 34 to detach the guanine base from the RNA, forming a covalent enzyme-RNA intermediate. The proton acceptor active site deprotonates the incoming PreQ1, allowing a nucleophilic attack on the C1' of the ribose to form the product. After dissociation, two additional enzymatic reactions on the tRNA convert PreQ1 to queuine (Q), resulting in the hypermodified nucleoside queuosine (7-(((4,5-cis-dihydroxy-2-cyclopenten-1-yl)amino)methyl)-7-deazaguanosine). The polypeptide is Queuine tRNA-ribosyltransferase (Prochlorococcus marinus subsp. pastoris (strain CCMP1986 / NIES-2087 / MED4)).